The primary structure comprises 565 residues: NAD-dependent malic enzyme (565 aa).

Residue tyrosine 104 is the Proton donor of the active site. Residue arginine 157 coordinates NAD(+). Lysine 175 (proton acceptor) is an active-site residue. A divalent metal cation-binding residues include glutamate 246, aspartate 247, and aspartate 270. NAD(+) contacts are provided by aspartate 270 and asparagine 418.

This sequence belongs to the malic enzymes family. As to quaternary structure, homotetramer. It depends on Mg(2+) as a cofactor. The cofactor is Mn(2+).

It catalyses the reaction (S)-malate + NAD(+) = pyruvate + CO2 + NADH. The enzyme catalyses oxaloacetate + H(+) = pyruvate + CO2. In Pectobacterium atrosepticum (strain SCRI 1043 / ATCC BAA-672) (Erwinia carotovora subsp. atroseptica), this protein is NAD-dependent malic enzyme.